A 296-amino-acid polypeptide reads, in one-letter code: Outer surface protein B (296 aa).

An N-terminal signal peptide occupies residues 1–15; sequence MRLLIGFALALALIG. The N-palmitoyl cysteine moiety is linked to residue Cys16. Cys16 carries the S-diacylglycerol cysteine lipid modification. The interval 25 to 51 is disordered; the sequence is GSQKENDLNLEDSSKKSHQNAKQDLPA. Residues 28–39 show a composition bias toward basic and acidic residues; it reads KENDLNLEDSSK.

Its subcellular location is the cell outer membrane. This Borreliella burgdorferi (strain ATCC 35210 / DSM 4680 / CIP 102532 / B31) (Borrelia burgdorferi) protein is Outer surface protein B (ospB).